The primary structure comprises 272 residues: GTP cyclohydrolase FolE2 (272 aa).

Belongs to the GTP cyclohydrolase IV family.

The enzyme catalyses GTP + H2O = 7,8-dihydroneopterin 3'-triphosphate + formate + H(+). It functions in the pathway cofactor biosynthesis; 7,8-dihydroneopterin triphosphate biosynthesis; 7,8-dihydroneopterin triphosphate from GTP: step 1/1. Converts GTP to 7,8-dihydroneopterin triphosphate. In Aromatoleum aromaticum (strain DSM 19018 / LMG 30748 / EbN1) (Azoarcus sp. (strain EbN1)), this protein is GTP cyclohydrolase FolE2.